A 461-amino-acid polypeptide reads, in one-letter code: Glycine--tRNA ligase (461 aa).

Residues R100 and E163 each coordinate substrate. ATP is bound by residues 195–197, 205–210, 282–283, and 326–329; these read RNE, FRTREF, EL, and GLGR. 210–214 contributes to the substrate binding site; that stretch reads FEQME. 322-326 provides a ligand contact to substrate; that stretch reads EPAAG.

Belongs to the class-II aminoacyl-tRNA synthetase family. As to quaternary structure, homodimer.

Its subcellular location is the cytoplasm. The enzyme catalyses tRNA(Gly) + glycine + ATP = glycyl-tRNA(Gly) + AMP + diphosphate. In terms of biological role, catalyzes the attachment of glycine to tRNA(Gly). The polypeptide is Glycine--tRNA ligase (Corynebacterium efficiens (strain DSM 44549 / YS-314 / AJ 12310 / JCM 11189 / NBRC 100395)).